Here is a 406-residue protein sequence, read N- to C-terminus: Phosphatidylserine decarboxylase proenzyme, mitochondrial (406 aa).

Residues 1-49 constitute a mitochondrion transit peptide; the sequence is MAVAGGRGCVRSLREGVLWRSSPCHCDYTATRHFLGALQKLPLQAWVRK. The Mitochondrial matrix segment spans residues 50 to 60; that stretch reads VHTAPLRTLFL. Residues 61 to 79 traverse the membrane as a helical segment; it reads LRPVPILLAAGGGYAGYRQ. The Mitochondrial intermembrane segment spans residues 80 to 406; that stretch reads YEKYRERQLE…ILFGEALGSL (327 aa). Residues aspartate 188, histidine 264, and serine 375 each act as charge relay system; for autoendoproteolytic cleavage activity in the active site. The active-site Schiff-base intermediate with substrate; via pyruvic acid; for decarboxylase activity is the serine 375. Residue serine 375 is modified to Pyruvic acid (Ser); by autocatalysis.

Belongs to the phosphatidylserine decarboxylase family. PSD-B subfamily. Eukaryotic type I sub-subfamily. As to quaternary structure, heterodimer of a large membrane-associated beta subunit and a small pyruvoyl-containing alpha subunit. The cofactor is pyruvate. In terms of processing, is synthesized initially as an inactive proenzyme. Formation of the active enzyme involves a self-maturation process in which the active site pyruvoyl group is generated from an internal serine residue via an autocatalytic post-translational modification. Two non-identical subunits are generated from the proenzyme in this reaction, and the pyruvate is formed at the N-terminus of the alpha chain, which is derived from the carboxyl end of the proenzyme. The autoendoproteolytic cleavage occurs by a canonical serine protease mechanism, in which the side chain hydroxyl group of the serine supplies its oxygen atom to form the C-terminus of the beta chain, while the remainder of the serine residue undergoes an oxidative deamination to produce ammonia and the pyruvoyl prosthetic group on the alpha chain. During this reaction, the Ser that is part of the protease active site of the proenzyme becomes the pyruvoyl prosthetic group, which constitutes an essential element of the active site of the mature decarboxylase.

The protein localises to the mitochondrion inner membrane. Its subcellular location is the cytoplasm. It is found in the lipid droplet. The enzyme catalyses a 1,2-diacyl-sn-glycero-3-phospho-L-serine + H(+) = a 1,2-diacyl-sn-glycero-3-phosphoethanolamine + CO2. Its pathway is phospholipid metabolism; phosphatidylethanolamine biosynthesis. Its activity is regulated as follows. Inhibited by hydroxylamine. In terms of biological role, catalyzes the formation of phosphatidylethanolamine (PtdEtn) from phosphatidylserine (PtdSer). Plays a central role in phospholipid metabolism and in the interorganelle trafficking of phosphatidylserine. May be involved in lipid droplet biogenesis at the endoplasmic reticulum membrane. The polypeptide is Phosphatidylserine decarboxylase proenzyme, mitochondrial (Rattus norvegicus (Rat)).